The following is a 1307-amino-acid chain: Contactin-associated protein like 5-3 (1307 aa).

Positions 1 to 24 are cleaved as a signal peptide; sequence MDFVPRLNSVLTLVLSGLWHFGLT. Over 25–1238 the chain is Extracellular; sequence ATNCDNCDDP…PLTNAVLSDS (1214 aa). Positions 31–175 constitute an F5/8 type C domain; that stretch reads CDDPLASFLS…IGMRMEVYGC (145 aa). A disulfide bridge links Cys31 with Cys175. 2 consecutive Laminin G-like domains span residues 181-361 and 368-545; these read VADF…TFSC and PITF…IDLC. N-linked (GlcNAc...) asparagine glycosylation occurs at Asn283. The cysteines at positions 330 and 361 are disulfide-linked. N-linked (GlcNAc...) asparagine glycosylation is present at Asn497. 4 cysteine pairs are disulfide-bonded: Cys513/Cys545, Cys551/Cys562, Cys556/Cys571, and Cys573/Cys583. An EGF-like 1 domain is found at 547–584; sequence IKDRCLPNYCEHGGHCVQTWTTFYCNCSNTGYTGATCH. The 208-residue stretch at 585 to 792 folds into the Fibrinogen C-terminal domain; it reads DSIYEQSCEV…LRCYGDRHFW (208 aa). Asn600, Asn624, and Asn637 each carry an N-linked (GlcNAc...) asparagine glycan. The Laminin G-like 3 domain occupies 793–958; that stretch reads NAVSFSTEAS…MVTSGVRPGC (166 aa). 5 cysteine pairs are disulfide-bonded: Cys931-Cys958, Cys962-Cys975, Cys969-Cys984, Cys986-Cys996, and Cys1165-Cys1200. Positions 959 to 997 constitute an EGF-like 2 domain; sequence PGHCSSYGNNCHNGGKCVEKHNSYSCDCTKSPYEGPFCQ. Positions 1019–1200 constitute a Laminin G-like 4 domain; it reads PVSKNTSTSS…VQGSLREFSC (182 aa). The chain crosses the membrane as a helical span at residues 1239–1259; it reads AVIGGVIAVVTFITFCVIGIM. The Cytoplasmic segment spans residues 1260–1307; the sequence is TRFLYQHKQSHCTSQKKEKEYSENLDSSFRHDIDLQSTTSKCKREYFI.

It belongs to the neurexin family.

It is found in the membrane. May play a role in the correct development and proper functioning of the peripheral and central nervous system and be involved in cell adhesion and intercellular communication. In Rattus norvegicus (Rat), this protein is Contactin-associated protein like 5-3 (Cntnap5c).